The following is a 27-amino-acid chain: iraD leader peptide (27 aa).

Its function is as follows. A short protein whose stop codon overlaps with the start codon of downstream iraD; its mRNA secondary structure is predicted to fold and sequester the Shine-Dalgarno sequence of iraD. When this protein is expressed the downstream iraD is also expressed due to ribosomal coupling. The polypeptide is iraD leader peptide (idlP) (Escherichia coli (strain K12)).